A 92-amino-acid polypeptide reads, in one-letter code: Small ribosomal subunit protein uS19 (92 aa).

A disordered region spans residues 1 to 27 (MARSIKKGPFADDHLKKKVEAQSGSEK). Over residues 9 to 27 (PFADDHLKKKVEAQSGSEK) the composition is skewed to basic and acidic residues.

Belongs to the universal ribosomal protein uS19 family.

Protein S19 forms a complex with S13 that binds strongly to the 16S ribosomal RNA. In Staphylococcus saprophyticus subsp. saprophyticus (strain ATCC 15305 / DSM 20229 / NCIMB 8711 / NCTC 7292 / S-41), this protein is Small ribosomal subunit protein uS19.